The sequence spans 345 residues: MTDKTSLSYKDAGVDIDAGNALVGRIKGVVKKTRRPEVMGGLGGFGALYALPQKYREPVLVSGTDGVGTKLRLAMDLKRHDTIGIDLVAMCVNDLVVQGAEPLFFLDYYATGKLDVDTASAVISGIAEGCLQSGCSLVGGETAEMPGMYHGEDYDVAGFCVGVVEKSEIIDGSKVSDGDVLIALGSSGPHSNGYSLVRKILEVSGCDPQTTELDGKPLADHLLAPTRIYVKSVLELIEKVDVHAIAHLTGGGFWENIPRVLPDNTQAVIDESSWQWPEVFNWLQTAGNVERHEMYRTFNCGVGMIIALPAPEVDKALALLNANGENAWKIGIIKASDSEQRVVIE.

Belongs to the AIR synthase family.

It is found in the cytoplasm. The enzyme catalyses 2-formamido-N(1)-(5-O-phospho-beta-D-ribosyl)acetamidine + ATP = 5-amino-1-(5-phospho-beta-D-ribosyl)imidazole + ADP + phosphate + H(+). It functions in the pathway purine metabolism; IMP biosynthesis via de novo pathway; 5-amino-1-(5-phospho-D-ribosyl)imidazole from N(2)-formyl-N(1)-(5-phospho-D-ribosyl)glycinamide: step 2/2. This is Phosphoribosylformylglycinamidine cyclo-ligase from Escherichia coli (strain SE11).